We begin with the raw amino-acid sequence, 334 residues long: Probable type II restriction enzyme HindVP (334 aa).

The enzyme catalyses Endonucleolytic cleavage of DNA to give specific double-stranded fragments with terminal 5'-phosphates.. Its function is as follows. A P subtype restriction enzyme that recognizes the double-stranded sequence 5'-GRCGYC-3'; the cleavage site is unknown. This Haemophilus influenzae (strain ATCC 51907 / DSM 11121 / KW20 / Rd) protein is Probable type II restriction enzyme HindVP (hindVRP).